The sequence spans 264 residues: H-2 class II histocompatibility antigen, I-E beta chain (264 aa).

Positions 1–31 (MVWLPRVPCVAAVILLLTVLSPPVALVRNSR) are cleaved as a signal peptide. Residues 32-121 (PRFLEYSTSE…IFDNFLVPRR (90 aa)) are beta-1. At 32–225 (PRFLEYSTSE…KAQSTSAQNK (194 aa)) the chain is on the extracellular side. 2 cysteine pairs are disulfide-bonded: Cys42–Cys106 and Cys144–Cys200. An N-linked (GlcNAc...) asparagine glycan is attached at Asn46. Positions 122-215 (VEPTVTVYPT…SLTDPVTVEW (94 aa)) are beta-2. One can recognise an Ig-like C1-type domain in the interval 124-214 (PTVTVYPTKT…PSLTDPVTVE (91 aa)). Residues 216-225 (KAQSTSAQNK) are connecting peptide. Residues 226–248 (MLSGVGGFVLGLLFLGAGLFIYF) form a helical membrane-spanning segment. Over 249 to 264 (RNQKGQSGLQPTGLLS) the chain is Cytoplasmic.

This sequence belongs to the MHC class II family. In terms of processing, ubiquitinated in immature dendritic cells leading to down-regulation of MHC class II.

It is found in the membrane. The chain is H-2 class II histocompatibility antigen, I-E beta chain (H2-Eb1) from Mus musculus (Mouse).